The following is a 241-amino-acid chain: MDATIRLEESWKAVLGGEFRHGYMAELKRFLLEEKQQGRQIFPRGVEYFRALDLTPLDRVRVVILGQDPYHGDGQAHGLCFSVRPGVRTPPSLVNIYKELQEDLGIPPARHGFLESWARQGVLLLNSVLTVERGRAASHQGRGWERFTDAVIRAVNEQAQPVVFMLWGSYAQRKAAFVDRSRHLVLTAPHPSPLSAHAGFFGCRHFSKANAFLTSKGLDPIDWRLPEDPPLAVERQMAPNC.

Residue D68 is the Proton acceptor of the active site.

Belongs to the uracil-DNA glycosylase (UDG) superfamily. UNG family.

Its subcellular location is the cytoplasm. It catalyses the reaction Hydrolyzes single-stranded DNA or mismatched double-stranded DNA and polynucleotides, releasing free uracil.. Its function is as follows. Excises uracil residues from the DNA which can arise as a result of misincorporation of dUMP residues by DNA polymerase or due to deamination of cytosine. The chain is Uracil-DNA glycosylase from Rhizobium meliloti (strain 1021) (Ensifer meliloti).